The chain runs to 441 residues: uncharacterized protein (441 aa).

The next 12 membrane-spanning stretches (helical) occupy residues 21 to 41, 51 to 71, 94 to 114, 118 to 138, 150 to 170, 195 to 215, 239 to 259, 260 to 280, 291 to 311, 334 to 354, 363 to 383, and 419 to 439; these read VVVA…MSLG, LGGG…AVAI, AAST…VTMS, VIPV…GVFA, VLTF…GGIF, AMLL…FVSY, QHIL…LYTG, SMII…VIAW, VHMM…AAVM, LAAL…GSSF, IYVP…ALVG, and VVPT…IAAM.

It localises to the cell membrane. This is an uncharacterized protein from Vibrio parahaemolyticus serotype O3:K6 (strain RIMD 2210633).